The following is a 545-amino-acid chain: CTP synthase (545 aa).

The interval 1–267 is amidoligase domain; it reads MTKFIFVTGG…AEQTLKLLQM (267 aa). CTP is bound at residue S13. S13 is a UTP binding site. Residues 14 to 19 and D71 each bind ATP; that span reads SIGKGI. Positions 71 and 141 each coordinate Mg(2+). Residues 148–150, 188–193, and K224 each bind CTP; these read DIE and KTKPTQ. Residues 188–193 and K224 each bind UTP; that span reads KTKPTQ. Residues 292–534 enclose the Glutamine amidotransferase type-1 domain; that stretch reads EIAIVGKYVS…VQAAIAQSHP (243 aa). G354 lines the L-glutamine pocket. Catalysis depends on C381, which acts as the Nucleophile; for glutamine hydrolysis. Residues 382 to 385, E405, and R462 contribute to the L-glutamine site; that span reads LGMQ. Residues H507 and E509 contribute to the active site.

This sequence belongs to the CTP synthase family. Homotetramer.

It catalyses the reaction UTP + L-glutamine + ATP + H2O = CTP + L-glutamate + ADP + phosphate + 2 H(+). The catalysed reaction is L-glutamine + H2O = L-glutamate + NH4(+). The enzyme catalyses UTP + NH4(+) + ATP = CTP + ADP + phosphate + 2 H(+). It participates in pyrimidine metabolism; CTP biosynthesis via de novo pathway; CTP from UDP: step 2/2. Its activity is regulated as follows. Allosterically activated by GTP, when glutamine is the substrate; GTP has no effect on the reaction when ammonia is the substrate. The allosteric effector GTP functions by stabilizing the protein conformation that binds the tetrahedral intermediate(s) formed during glutamine hydrolysis. Inhibited by the product CTP, via allosteric rather than competitive inhibition. Functionally, catalyzes the ATP-dependent amination of UTP to CTP with either L-glutamine or ammonia as the source of nitrogen. Regulates intracellular CTP levels through interactions with the four ribonucleotide triphosphates. The protein is CTP synthase of Trichormus variabilis (strain ATCC 29413 / PCC 7937) (Anabaena variabilis).